A 326-amino-acid polypeptide reads, in one-letter code: Mitochondrial substrate carrier family protein R (326 aa).

3 Solcar repeats span residues Thr-9–Asn-95, Lys-101–Ile-214, and Val-226–Tyr-318. 6 helical membrane passes run Met-12 to Leu-32, Leu-64 to Ile-84, Val-104 to Leu-124, Gly-185 to Tyr-205, Val-226 to Ala-246, and Leu-290 to Leu-310.

Belongs to the mitochondrial carrier (TC 2.A.29) family.

It is found in the mitochondrion inner membrane. In terms of biological role, mitochondrial solute carriers shuttle metabolites, nucleotides, and cofactors through the mitochondrial inner membrane. May be involved in the accumulation of coenzyme A in the mitochondrial matrix. This Dictyostelium discoideum (Social amoeba) protein is Mitochondrial substrate carrier family protein R (mcfR).